A 460-amino-acid chain; its full sequence is Cyclin-A1-1 (460 aa).

2 disordered regions span residues 1-52 (MSNI…ITNQ) and 95-126 (PHKVASSPSKSDDGSVSMDETRSSSDSYKSPQ). Composition is skewed to low complexity over residues 10 to 19 (SSFSSSTKSS) and 100 to 111 (SSPSKSDDGSVS).

Belongs to the cyclin family. Cyclin AB subfamily. In terms of assembly, interacts with FZR2/CCS52A1, FZR1/CCS52A2 and FZR3/CCS52B.

This chain is Cyclin-A1-1 (CYCA1-1), found in Arabidopsis thaliana (Mouse-ear cress).